Reading from the N-terminus, the 462-residue chain is Argininosuccinate lyase (462 aa).

It belongs to the lyase 1 family. Argininosuccinate lyase subfamily.

Its subcellular location is the cytoplasm. It carries out the reaction 2-(N(omega)-L-arginino)succinate = fumarate + L-arginine. It functions in the pathway amino-acid biosynthesis; L-arginine biosynthesis; L-arginine from L-ornithine and carbamoyl phosphate: step 3/3. In Streptococcus agalactiae serotype III (strain NEM316), this protein is Argininosuccinate lyase.